Reading from the N-terminus, the 600-residue chain is ATP-dependent lipid A-core flippase (600 aa).

The next 6 membrane-spanning stretches (helical) occupy residues 28–48 (TLSI…IAFI), 80–100 (VMLM…VANF), 159–179 (ALIS…LMFF), 182–202 (WKLS…ISIV), 267–287 (VSQP…LYAA), and 295–315 (ELTA…LQPI). The ABC transmembrane type-1 domain occupies 29-327 (LSILGLIVYG…LTRVNAEFQR (299 aa)). Residues 359–596 (LRFDNVSFSY…KGAYAGLYQM (238 aa)) enclose the ABC transporter domain. An ATP-binding site is contributed by 393–400 (GRSGSGKS).

This sequence belongs to the ABC transporter superfamily. Lipid exporter (TC 3.A.1.106) family. As to quaternary structure, homodimer.

The protein localises to the cell inner membrane. The catalysed reaction is ATP + H2O + lipid A-core oligosaccharideSide 1 = ADP + phosphate + lipid A-core oligosaccharideSide 2.. Functionally, involved in lipopolysaccharide (LPS) biosynthesis. Translocates lipid A-core from the inner to the outer leaflet of the inner membrane. Transmembrane domains (TMD) form a pore in the inner membrane and the ATP-binding domain (NBD) is responsible for energy generation. The polypeptide is ATP-dependent lipid A-core flippase (Shewanella denitrificans (strain OS217 / ATCC BAA-1090 / DSM 15013)).